The sequence spans 288 residues: Quinate/shikimate dehydrogenase (288 aa).

Substrate is bound by residues lysine 71 and aspartate 107. Residues 132–135 (AGGA), 155–158 (NRRD), lysine 205, 232–235 (CVYN), and glycine 255 each bind NAD(+).

Belongs to the shikimate dehydrogenase family. Homodimer.

The enzyme catalyses L-quinate + NAD(+) = 3-dehydroquinate + NADH + H(+). The catalysed reaction is L-quinate + NADP(+) = 3-dehydroquinate + NADPH + H(+). It carries out the reaction shikimate + NADP(+) = 3-dehydroshikimate + NADPH + H(+). It catalyses the reaction shikimate + NAD(+) = 3-dehydroshikimate + NADH + H(+). It functions in the pathway metabolic intermediate biosynthesis; chorismate biosynthesis; chorismate from D-erythrose 4-phosphate and phosphoenolpyruvate: step 4/7. Its function is as follows. The actual biological function of YdiB remains unclear, nor is it known whether 3-dehydroshikimate or quinate represents the natural substrate. Catalyzes the reversible NAD-dependent reduction of both 3-dehydroshikimate (DHSA) and 3-dehydroquinate to yield shikimate (SA) and quinate, respectively. It can use both NAD or NADP for catalysis, however it has higher catalytic efficiency with NAD. This is Quinate/shikimate dehydrogenase from Shigella flexneri.